We begin with the raw amino-acid sequence, 168 residues long: Protein OPG162 (168 aa).

Residues 1 to 14 (MKSLNRQTVSRFKK) are Intravirion-facing. A helical membrane pass occupies residues 15–37 (LSVPAAIMMILSTIISGIGTFLH). At 38–168 (YKEELMPSAC…SVLCVKKFYK (131 aa)) the chain is on the virion surface side. The 110-residue stretch at 54–163 (YDKHCYLDTN…CKSTQSVLCV (110 aa)) folds into the C-type lectin domain. 2 disulfides stabilise this stretch: cysteine 75–cysteine 162 and cysteine 141–cysteine 154. The N-linked (GlcNAc...) asparagine; by host glycan is linked to asparagine 133.

This sequence belongs to the orthopoxvirus OPG162 protein family. As to quaternary structure, interacts with protein OPG161. Interacts with protein OPG164. Interacts with protein OPG190.

The protein localises to the virion membrane. It localises to the host Golgi apparatus. Functionally, forms a complex with OPG162 and OPG190 to coordinate the incorporation of OPG164 into wrapped enveloped virion (EV) membranes and, subsequently, the production of actin tails. Therefore plays an essential role in efficient cell-to-cell spread of viral particles. The polypeptide is Protein OPG162 (OPG162) (Vaccinia virus (strain Western Reserve) (VACV)).